The following is a 554-amino-acid chain: Putative acyl-coenzyme A synthetase (554 aa).

195–206 lines the AMP pocket; the sequence is LLYSSGTTGPPK.

It belongs to the ATP-dependent AMP-binding enzyme family.

This Emericella nidulans (strain FGSC A4 / ATCC 38163 / CBS 112.46 / NRRL 194 / M139) (Aspergillus nidulans) protein is Putative acyl-coenzyme A synthetase.